The primary structure comprises 1043 residues: Desmoglein-1 (1043 aa).

The signal sequence occupies residues 1-23; the sequence is MNWPFFRAAVVLFIFLVVLEVNS. The propeptide occupies 24-49; it reads DFRIQVRDYNTKNGTIKWHSLRRQKR. 4 consecutive Cadherin domains span residues 50-158, 159-270, 271-385, and 386-498; these read EWIK…PVFS, MSTF…PYME, LPTQ…GSVF, and RPGS…VNGS. The Extracellular segment spans residues 50–551; it reads EWIKFAAACR…PLRDNVHFGP (502 aa). 2 N-linked (GlcNAc...) asparagine glycosylation sites follow: asparagine 110 and asparagine 180. Residue asparagine 496 is glycosylated (N-linked (GlcNAc...) asparagine). The helical transmembrane segment at 552–572 threads the bilayer; sequence AGIGLLIMGFLVLGLVPFLLM. The Cytoplasmic segment spans residues 573 to 1043; sequence CCDCGGAPGG…TKYSTVQYTK (471 aa). Residues 770-807 form a disordered region; the sequence is DVEPFPDSDPSWPPKSTEPVCPPQGTEPTGGGHPPISP. Desmoglein repeat repeat units lie at residues 819 to 845, 846 to 875, 876 to 905, 906 to 933, and 934 to 962; these read TYPS…TVTE, SYTS…ERVV, GPIS…ERVI, APSS…ERVI, and QPTS…ERVV.

As to quaternary structure, binds to JUP/plakoglobin. Interacts with PKP2. Interacts with DSC3; there is evidence to suggest that the interaction promotes cell-cell adhesion of keratinocytes. As to expression, expressed in the epidermis. Expressed in the muzzle epithelium.

The protein resides in the cell membrane. It localises to the cell junction. The protein localises to the desmosome. Its subcellular location is the cytoplasm. It is found in the nucleus. Its function is as follows. Component of intercellular desmosome junctions. Involved in the interaction of plaque proteins and intermediate filaments mediating cell-cell adhesion. The sequence is that of Desmoglein-1 (DSG1) from Bos taurus (Bovine).